We begin with the raw amino-acid sequence, 103 residues long: Small ribosomal subunit protein bS6c (103 aa).

Belongs to the bacterial ribosomal protein bS6 family.

It is found in the plastid. The protein localises to the chloroplast. Binds together with bS18 to 16S ribosomal RNA. In Cyanidium caldarium (Red alga), this protein is Small ribosomal subunit protein bS6c (rps6).